The sequence spans 203 residues: SOSS complex subunit B1 (203 aa).

The segment at residues 22–92 is a DNA-binding region (OB); the sequence is IVLETGRVTK…TLYTGRGGDL (71 aa). A disordered region spans residues 111-203; the sequence is PNPEYIAQQS…GKEPRRTGKR (93 aa). The span at 117–128 shows a compositional bias: polar residues; sequence AQQSQNKQAQAE. Low complexity predominate over residues 129–140; that stretch reads SGTGTNSHNSSS. Residues 149 to 182 show a composition bias toward polar residues; the sequence is ENGNGSNSSGPPTHQSTAPTHSTSGRITRSQPNH.

This sequence belongs to the SOSS-B family. SOSS-B1 subfamily. Component of the SOSS complex, composed of soss-b (soss-b1/nabp2 or soss-b2/nabp1), soss-a/ints3 and soss-c/inip. SOSS complexes containing soss-b1/nabp2 are more abundant than complexes containing soss-b2/nabp1.

It is found in the nucleus. Its function is as follows. Component of the SOSS complex, a multiprotein complex that functions downstream of the MRN complex to promote DNA repair and G2/M checkpoint. In the SOSS complex, acts as a sensor of single-stranded DNA that binds to single-stranded DNA. The SOSS complex associates with DNA lesions and influences diverse endpoints in the cellular DNA damage response including cell-cycle checkpoint activation, recombinational repair and maintenance of genomic stability. Required for efficient homologous recombination-dependent repair of double-strand breaks (DSBs). The polypeptide is SOSS complex subunit B1 (nabp2) (Xenopus tropicalis (Western clawed frog)).